The chain runs to 184 residues: Large ribosomal subunit protein uL5 (184 aa).

This sequence belongs to the universal ribosomal protein uL5 family. Part of the 50S ribosomal subunit; part of the 5S rRNA/L5/L18/L25 subcomplex. Contacts the 5S rRNA and the P site tRNA. Forms a bridge to the 30S subunit in the 70S ribosome.

Functionally, this is one of the proteins that bind and probably mediate the attachment of the 5S RNA into the large ribosomal subunit, where it forms part of the central protuberance. In the 70S ribosome it contacts protein S13 of the 30S subunit (bridge B1b), connecting the 2 subunits; this bridge is implicated in subunit movement. Contacts the P site tRNA; the 5S rRNA and some of its associated proteins might help stabilize positioning of ribosome-bound tRNAs. This Thermotoga sp. (strain RQ2) protein is Large ribosomal subunit protein uL5.